The sequence spans 470 residues: UDP-N-acetylmuramate--L-alanine ligase (470 aa).

An ATP-binding site is contributed by 118 to 124; it reads GTHGKTT.

This sequence belongs to the MurCDEF family.

It is found in the cytoplasm. It catalyses the reaction UDP-N-acetyl-alpha-D-muramate + L-alanine + ATP = UDP-N-acetyl-alpha-D-muramoyl-L-alanine + ADP + phosphate + H(+). It functions in the pathway cell wall biogenesis; peptidoglycan biosynthesis. Functionally, cell wall formation. This is UDP-N-acetylmuramate--L-alanine ligase from Cereibacter sphaeroides (strain KD131 / KCTC 12085) (Rhodobacter sphaeroides).